Consider the following 282-residue polypeptide: Glutamate racemase (282 aa).

Substrate-binding positions include 13–14 (DS) and 45–46 (YG). The Proton donor/acceptor role is filled by C76. Residue 77 to 78 (NT) coordinates substrate. C186 serves as the catalytic Proton donor/acceptor. Residue 187-188 (TH) coordinates substrate.

This sequence belongs to the aspartate/glutamate racemases family.

The enzyme catalyses L-glutamate = D-glutamate. It functions in the pathway cell wall biogenesis; peptidoglycan biosynthesis. Its function is as follows. Provides the (R)-glutamate required for cell wall biosynthesis. The polypeptide is Glutamate racemase (Ralstonia pickettii (strain 12J)).